The primary structure comprises 494 residues: MGSSVSKNISKVATEALARASSDILLQTDLTTDQTQVISVSDVGGDVVISGNEFIQKATINMKALMNALIQENVQQNLTLQIAQAAKSIVSGFNMFQLPNAQNEIDLFVRASIELVNTISQVCTSSVSENYLIDIKRVKGSVRIQNNTVRQFVDIFGSCVQNAVASNAIFQDLQAKLDQSATSKADGLTLWQVAALVAIVLGVPVVSVIGGIAVAGRWMFPISILAGAGCLVVWSSQANTTMADHAFSRFVRNTSDCLGTALGPVLQTLPNSNAAAQSCLSNADCVAFDWQGTVVDDKGTNKVLTPPQTTFYNKVSSICEQAVKSNPDTTRLVRLPIFAKGVGSPQSKASPPADVYLDTATTNYYFFDPPTNMWVKQGTFAHAEWSAAKNQIDWGTITPTVSTPGTPGNIYVYYGSDNPIYFYVYVKTADSWSLYTPTLRGPGLVTDTPATINVSGFKVNQRRQWLLYLGVALIIVGIFGSILAFNSRRPEERK.

A lipid anchor (N-myristoyl glycine; by host) is attached at G2. 3 helical membrane-spanning segments follow: residues 193–213 (VAAL…GGIA), 214–234 (VAGR…LVVW), and 465–485 (WLLY…ILAF).

It belongs to the IIV-6 118L/458R family.

Its subcellular location is the membrane. In Aedes vexans (Inland floodwater mosquito), this protein is Putative myristoylated protein 006R.